Consider the following 481-residue polypeptide: MMLKSITESFATAIHGLKVGHLTDRVIQRSKRMILDTLGAGFLGTTTEVFHIASQYSKIYSSNISSTVWGQPDIRLPPTYAAFVNGVAIHSMDFDDTWHPATHPSGAVLPVLTALAEALPRSPKFSGLDLLLAFNVGIEVQGRLLHFAKEANDMPKRFHPPSVVGTLGSAAAASKFLGLSSTKCREALAIAVSHAGAPMANAATQTKPLHIGNAAKHGIEAAFLAMLGLQGNKQVLDLEAGFGAFYANYSPKVLPSIASYSWLLDQQDVAFKRFPAHLSTHWVADAAASVRKHLVAERALLPTDYIKRIVLRIPNVQYVNRPFPVSEHEARHSFQYVACAMLLDGGITVPSFHECQINRPQVRELLSKVELEYPPDNLPSFNILYCEISVTLKDGATFTDRSDTFYGHWRKPLSQEDLEEKFRANASKMLSWDTVESLIKIVKNLEDLEDCSVLTTLLKGPSPPEVASNSPACNNSITNLS.

The interval 462-481 (SPPEVASNSPACNNSITNLS) is disordered. Residues 467-481 (ASNSPACNNSITNLS) show a composition bias toward polar residues.

This sequence belongs to the PrpD family. As to quaternary structure, homodimer. In terms of tissue distribution, expressed in LPS-tolerized macrophages (at protein level). Expressed in peripheral blood mononuclear cells (PBMCs), microglia and macrophage cells.

The protein localises to the mitochondrion. The enzyme catalyses cis-aconitate + H(+) = itaconate + CO2. Its function is as follows. Cis-aconitate decarboxylase that catalyzes production of itaconate and is involved in the inhibition of the inflammatory response. Acts as a negative regulator of the Toll-like receptors (TLRs)-mediated inflammatory innate response by stimulating the tumor necrosis factor alpha-induced protein TNFAIP3 expression via reactive oxygen species (ROS) in LPS-tolerized macrophages. Involved in antimicrobial response of innate immune cells; ACOD1-mediated itaconic acid production contributes to the antimicrobial activity of macrophages by generating itaconate, leading to alkylation of proteins, such as TFEB. Involved in antiviral response following infection by flavivirus in neurons: ACOD1-mediated itaconate production inhibits the activity of succinate dehydrogenase, generating a metabolic state in neurons that suppresses replication of viral genomes. Plays a role in the embryo implantation. This Homo sapiens (Human) protein is Cis-aconitate decarboxylase.